Consider the following 271-residue polypeptide: MTRWARVTTSNSKRPLSATSWEDMKKGSVERADQSLPNRKQCQSSRLPLRNDSPQAKRKKNKKKKEYLNEDVNGFMEYLKQNSQVLHNGQLIAADSQEVREEIAVALKKDSRREGRRLKRQAAKKNAMVCFHCRQPGHGIADCPAVLESQDMGTGICYRCGSTEHEMSKCRANVDPALGEFPFAKCFVCGEMGHLSRSCPDNTKGVYADGGSCKLCGSVEHFKKDCRENQNSDRIITVGRWAKGMSADYEDVLDVPKLQKPKTKVPKVVNF.

Residues 1-67 (MTRWARVTTS…RKKNKKKKEY (67 aa)) form a disordered region. Polar residues predominate over residues 7–20 (VTTSNSKRPLSATS). Residues 22–33 (EDMKKGSVERAD) are compositionally biased toward basic and acidic residues. Polar residues predominate over residues 35–46 (SLPNRKQCQSSR). The segment covering 56–65 (AKRKKNKKKK) has biased composition (basic residues). 4 CCHC-type zinc fingers span residues 128-145 (MVCF…DCPA), 155-172 (GICY…KCRA), 184-201 (AKCF…SCPD), and 211-228 (GSCK…DCRE).

As to expression, detected in brain cortex and in testis.

The protein resides in the nucleus. It is found in the nucleolus. In terms of biological role, may down-regulate transcription mediated by NF-kappa-B and the serum response element. This Mus musculus (Mouse) protein is Zinc finger CCHC domain-containing protein 9 (Zcchc9).